A 359-amino-acid polypeptide reads, in one-letter code: Phospho-N-acetylmuramoyl-pentapeptide-transferase (359 aa).

10 helical membrane-spanning segments follow: residues 3 to 23 (QILI…PVLI), 55 to 75 (VAIL…GLAL), 84 to 104 (GLLV…DDLI), 120 to 140 (TVGI…FGNA), 156 to 176 (IATV…LVSA), 187 to 207 (LDGL…LITF), 231 to 251 (LALV…WNAA), 255 to 275 (IFMG…LSVT), 280 to 300 (ILAV…VVQI), and 334 to 354 (FWLL…GEWL).

It belongs to the glycosyltransferase 4 family. MraY subfamily. Mg(2+) is required as a cofactor.

It is found in the cell membrane. It catalyses the reaction UDP-N-acetyl-alpha-D-muramoyl-L-alanyl-gamma-D-glutamyl-meso-2,6-diaminopimeloyl-D-alanyl-D-alanine + di-trans,octa-cis-undecaprenyl phosphate = di-trans,octa-cis-undecaprenyl diphospho-N-acetyl-alpha-D-muramoyl-L-alanyl-D-glutamyl-meso-2,6-diaminopimeloyl-D-alanyl-D-alanine + UMP. The protein operates within cell wall biogenesis; peptidoglycan biosynthesis. In terms of biological role, catalyzes the initial step of the lipid cycle reactions in the biosynthesis of the cell wall peptidoglycan: transfers peptidoglycan precursor phospho-MurNAc-pentapeptide from UDP-MurNAc-pentapeptide onto the lipid carrier undecaprenyl phosphate, yielding undecaprenyl-pyrophosphoryl-MurNAc-pentapeptide, known as lipid I. The sequence is that of Phospho-N-acetylmuramoyl-pentapeptide-transferase from Mycobacterium sp. (strain JLS).